The sequence spans 165 residues: Small ribosomal subunit protein bS16 (165 aa).

This sequence belongs to the bacterial ribosomal protein bS16 family.

The chain is Small ribosomal subunit protein bS16 from Azobacteroides pseudotrichonymphae genomovar. CFP2.